Here is a 451-residue protein sequence, read N- to C-terminus: tRNA-2-methylthio-N(6)-dimethylallyladenosine synthase (451 aa).

The MTTase N-terminal domain occupies 6–122 (RHYHITTFGC…LQDLLEQVFN (117 aa)). Positions 15, 51, 85, 157, 161, and 164 each coordinate [4Fe-4S] cluster. One can recognise a Radical SAM core domain in the interval 143-380 (RDSKITAWVN…NHLVGVKAAD (238 aa)). In terms of domain architecture, TRAM spans 383 to 447 (QRYMGRIEEV…PFSLTGEVKE (65 aa)).

It belongs to the methylthiotransferase family. MiaB subfamily. In terms of assembly, monomer. [4Fe-4S] cluster serves as cofactor.

Its subcellular location is the cytoplasm. The enzyme catalyses N(6)-dimethylallyladenosine(37) in tRNA + (sulfur carrier)-SH + AH2 + 2 S-adenosyl-L-methionine = 2-methylsulfanyl-N(6)-dimethylallyladenosine(37) in tRNA + (sulfur carrier)-H + 5'-deoxyadenosine + L-methionine + A + S-adenosyl-L-homocysteine + 2 H(+). Functionally, catalyzes the methylthiolation of N6-(dimethylallyl)adenosine (i(6)A), leading to the formation of 2-methylthio-N6-(dimethylallyl)adenosine (ms(2)i(6)A) at position 37 in tRNAs that read codons beginning with uridine. The polypeptide is tRNA-2-methylthio-N(6)-dimethylallyladenosine synthase (Trichodesmium erythraeum (strain IMS101)).